A 257-amino-acid polypeptide reads, in one-letter code: tRNA pseudouridine synthase A (257 aa).

Asp52 (nucleophile) is an active-site residue. Tyr111 is a substrate binding site.

Belongs to the tRNA pseudouridine synthase TruA family. Homodimer.

The enzyme catalyses uridine(38/39/40) in tRNA = pseudouridine(38/39/40) in tRNA. Its function is as follows. Formation of pseudouridine at positions 38, 39 and 40 in the anticodon stem and loop of transfer RNAs. This is tRNA pseudouridine synthase A from Cereibacter sphaeroides (strain ATCC 17025 / ATH 2.4.3) (Rhodobacter sphaeroides).